The following is a 35-amino-acid chain: Phospholipase A2 bitanarin (35 aa).

It belongs to the phospholipase A2 family. Group II subfamily. Monomer. Requires Ca(2+) as cofactor. Contains 14 disulfide bonds. Expressed by the venom gland.

The protein resides in the secreted. It catalyses the reaction a 1,2-diacyl-sn-glycero-3-phosphocholine + H2O = a 1-acyl-sn-glycero-3-phosphocholine + a fatty acid + H(+). Its function is as follows. Snake venom phospholipase A2 (PLA2) that is the first competitive blocker of nicotinic acetylcholine receptors (nAChRs). Competes with alpha-bungarotoxin for binding to nAChRs and acetylcholine binding proteins (AChBPs) and blocks acetylcholine-elicited current. PLA2 catalyzes the calcium-dependent hydrolysis of the 2-acyl groups in 3-sn-phosphoglycerides. The polypeptide is Phospholipase A2 bitanarin (Bitis arietans (African puff adder)).